A 512-amino-acid chain; its full sequence is Ribose import ATP-binding protein RbsA (512 aa).

ABC transporter domains are found at residues 6-242 (LELR…VNRE) and 252-496 (VPAG…TGAQ). 38-45 (GENGAGKS) provides a ligand contact to ATP.

It belongs to the ABC transporter superfamily. Ribose importer (TC 3.A.1.2.1) family. The complex is composed of an ATP-binding protein (RbsA), two transmembrane proteins (RbsC) and a solute-binding protein (RbsB).

It localises to the cell inner membrane. It carries out the reaction D-ribose(out) + ATP + H2O = D-ribose(in) + ADP + phosphate + H(+). Its function is as follows. Part of the ABC transporter complex RbsABC involved in ribose import. Responsible for energy coupling to the transport system. The protein is Ribose import ATP-binding protein RbsA of Pseudomonas putida (strain ATCC 47054 / DSM 6125 / CFBP 8728 / NCIMB 11950 / KT2440).